The chain runs to 698 residues: Elongation factor G (698 aa).

The tr-type G domain maps to 11 to 291 (THFRNIGIAA…AVVDYLPSPL (281 aa)). GTP is bound by residues 20-27 (AHIDAGKT), 90-94 (DTPGH), and 144-147 (NKMD).

Belongs to the TRAFAC class translation factor GTPase superfamily. Classic translation factor GTPase family. EF-G/EF-2 subfamily.

It is found in the cytoplasm. Its function is as follows. Catalyzes the GTP-dependent ribosomal translocation step during translation elongation. During this step, the ribosome changes from the pre-translocational (PRE) to the post-translocational (POST) state as the newly formed A-site-bound peptidyl-tRNA and P-site-bound deacylated tRNA move to the P and E sites, respectively. Catalyzes the coordinated movement of the two tRNA molecules, the mRNA and conformational changes in the ribosome. The protein is Elongation factor G of Deinococcus radiodurans (strain ATCC 13939 / DSM 20539 / JCM 16871 / CCUG 27074 / LMG 4051 / NBRC 15346 / NCIMB 9279 / VKM B-1422 / R1).